A 49-amino-acid polypeptide reads, in one-letter code: Small, acid-soluble spore protein O (49 aa).

The tract at residues 23-49 is disordered; it reads AGYNEKFSNEPLTEAQRQNNKKRKKNQ.

It belongs to the SspO family.

Its subcellular location is the spore core. In Geobacillus thermodenitrificans (strain NG80-2), this protein is Small, acid-soluble spore protein O.